The primary structure comprises 274 residues: Glutamate racemase (274 aa).

Substrate is bound by residues 9 to 10 and 41 to 42; these read DS and YG. The active-site Proton donor/acceptor is Cys72. 73-74 serves as a coordination point for substrate; that stretch reads NT. Catalysis depends on Cys184, which acts as the Proton donor/acceptor. 185 to 186 lines the substrate pocket; sequence TH.

The protein belongs to the aspartate/glutamate racemases family.

It carries out the reaction L-glutamate = D-glutamate. It functions in the pathway cell wall biogenesis; peptidoglycan biosynthesis. Provides the (R)-glutamate required for cell wall biosynthesis. The protein is Glutamate racemase of Oceanobacillus iheyensis (strain DSM 14371 / CIP 107618 / JCM 11309 / KCTC 3954 / HTE831).